Here is a 664-residue protein sequence, read N- to C-terminus: Macoilin (664 aa).

The next 4 helical transmembrane spans lie at 28 to 48 (TFLYLKFLVVWALVLLADFVL), 75 to 95 (AFSVFFVCVAFTSNIICLLFI), 120 to 140 (VCLPTVSLWILFVYIEAAIRF), and 154 to 174 (FAAHCIGYPVVTLGFGFKSYV). Over residues 253-265 (REKGKEKDKDAKK) the composition is skewed to basic and acidic residues. The tract at residues 253–274 (REKGKEKDKDAKKHNLGINNNN) is disordered. S305 carries the phosphoserine modification. The segment covering 320–348 (KNYKNASGVVNSSPRSHSATNGSIPSSSS) has biased composition (polar residues). The segment at 320–367 (KNYKNASGVVNSSPRSHSATNGSIPSSSSKNEKKQKCTSKSPSAHKDL) is disordered. Residue N324 is glycosylated (N-linked (GlcNAc...) asparagine). S332 carries the phosphoserine modification. N-linked (GlcNAc...) asparagine glycans are attached at residues N340 and N452. A disordered region spans residues 630 to 664 (TSPLSPVSPHYSSKFVETSPSGLDPNASVYQPLKK). Phosphoserine occurs at positions 631 and 634. N655 carries an N-linked (GlcNAc...) asparagine glycan.

It belongs to the macoilin family.

The protein resides in the rough endoplasmic reticulum membrane. Its subcellular location is the nucleus membrane. Functionally, plays a role in the regulation of neuronal activity. The sequence is that of Macoilin (MACO1) from Sus scrofa (Pig).